A 566-amino-acid polypeptide reads, in one-letter code: MDYGEAEDRDWRFPDTPMHCGVNMPSGSVSDMDRDYGHGGYGGPRSMDSYLNQSYGMESHGGGGGGGGGGGNRFGPYESYDSGSSLGGRDLYRSGYGYNEPEQSRFGGSYGGRFDNSYRNSLDSFGGRNQGGSSWEAPYSRSKLRPGFMEDRGRESYSSYSSFSSPHMKPAPVGSRGRGTPAYPESGFGSRNYDAFGGPSTGRGRGRGHMGDFGGMHRPGIVVDYHNKPSPAAVAARGIKRKMMPQPYNKPGGTFIKKPKMTKPILKLTQKKSSNMKSSFQDSTIEEIEVDTSGAVVIYEDFTRDAYDVGYQTFGDSKGEGKSEEEEKRRIEARREKQRRRREKNSEKYGDGYRMAFTCSFCKFRTFEEKEIESHLESAAHQETLDHIQKQTKFDKVVMEFLHECMVNKFKKTAMRKQQTSNQTENAQAVEKDIMEGVTADDHMMKVETVHCSACSVYVPALHSSVQQHLKSPDHTKGKQAYREQIKRESVLTATSILNNPIVKARYELYVKGENPFEINDQAQEQQTEEEDKAEEPAEGEEEEEEEEEEETEEQTDFTLDHTEDN.

Disordered stretches follow at residues 19–81 (HCGV…ESYD) and 145–180 (RPGF…GRGT). The span at 59 to 73 (SHGGGGGGGGGGGNR) shows a compositional bias: gly residues. Residues 156–165 (SYSSYSSFSS) are compositionally biased toward low complexity. The short motif at 240–263 (KRKMMPQPYNKPGGTFIKKPKMTK) is the Bipartite nuclear localization signal element. The disordered stretch occupies residues 314–347 (FGDSKGEGKSEEEEKRRIEARREKQRRRREKNSE). The span at 317–335 (SKGEGKSEEEEKRRIEARR) shows a compositional bias: basic and acidic residues. 2 consecutive C2H2 AKAP95-type zinc fingers follow at residues 359-381 (CSFC…SAAH) and 452-475 (CSAC…SPDH). The interval 516-566 (PFEINDQAQEQQTEEEDKAEEPAEGEEEEEEEEEEETEEQTDFTLDHTEDN) is disordered. Over residues 527–556 (QTEEEDKAEEPAEGEEEEEEEEEEETEEQT) the composition is skewed to acidic residues.

It belongs to the AKAP95 family. In terms of assembly, component of the DBIRD complex.

The protein localises to the nucleus. Core component of the DBIRD complex, a multiprotein complex that acts at the interface between core mRNP particles and RNA polymerase II (RNAPII) and integrates transcript elongation with the regulation of alternative splicing. This chain is DBIRD complex subunit ZNF326 (ZNF326), found in Gallus gallus (Chicken).